A 587-amino-acid polypeptide reads, in one-letter code: Prolycopene isomerase 1, chloroplastic (587 aa).

Over residues 1-13 the composition is skewed to low complexity; the sequence is MLCLSLNSSSTSP. The tract at residues 1 to 21 is disordered; that stretch reads MLCLSLNSSSTSPPKSPLHHS. A chloroplast-targeting transit peptide spans 1–50; sequence MLCLSLNSSSTSPPKSPLHHSFSRRSMRSWVCSPRVQRKKLGFWSSPKAV.

The protein belongs to the carotenoid/retinoid oxidoreductase family. CrtISO subfamily. The cofactor is NAD(+). Requires NADP(+) as cofactor. FAD is required as a cofactor. In terms of tissue distribution, up-regulated in the flower buds and flower lip tissue, while it is weakly expressed in leaves.

It is found in the plastid. The protein localises to the chloroplast membrane. The enzyme catalyses 7,7',9,9'-tetra-cis-lycopene = all-trans-lycopene. Its pathway is carotenoid biosynthesis; lycopene biosynthesis. Its function is as follows. Carotene cis-trans-isomerase that converts 7,9,9'-tri-cis-neurosporene to 9'-cis-neurosporene and 7,9,9',7'-tetra-cis-lycopene (also known as prolycopene) into all-trans-lycopene. Isomerization requires redox-active components, suggesting that isomerization is achieved by a reversible redox reaction acting at specific double bonds. Isomerizes adjacent cis-double bonds at C7 and C9 pairwise into the trans-configuration, but is incapable of isomerizing single cis-double bonds at C9 and C9'. The polypeptide is Prolycopene isomerase 1, chloroplastic (CRTISO1) (Oncidium hybrid cultivar (Orchid)).